The chain runs to 159 residues: MAGFMKNAMSYLGMSDVVDDEDDYIEEDEEQKPASKSAFDSDHTVTPLASTTAPAASSTTKPFPGGRVNRITTIHPKSYEDAQLVGRALRDGVPVVLNLTGVAEAVAYRIVDFSAGVVFGVRGSLERVTPRVFLLSPAQVNIKVEEPTKPASAHDLFAD.

The tract at residues aspartate 23–asparagine 69 is disordered. Residues threonine 44 to proline 64 are compositionally biased toward low complexity.

This sequence belongs to the SepF family. In terms of assembly, homodimer. Interacts with FtsZ.

The protein resides in the cytoplasm. Cell division protein that is part of the divisome complex and is recruited early to the Z-ring. Probably stimulates Z-ring formation, perhaps through the cross-linking of FtsZ protofilaments. Its function overlaps with FtsA. This chain is Cell division protein SepF, found in Bifidobacterium longum (strain DJO10A).